The chain runs to 56 residues: ComX pheromone (56 aa).

Positions 1-50 (MMQDLINYFLSYPEVLKKLKNREACLIGFSSNETETIIKAYNDYHLSSPT) are excised as a propeptide. Residue Trp54 is modified to Tryptophan derivative. Residue Trp54 is the site of 3'-farnesyl-2',N2-cyclotryptophan attachment.

Interacts directly with the sensor histidine kinase ComP and stimulates its activity. Trp-54 is modified by farnesylation, which is essential for activity. Modified by the tryptophan prenyltransferase ComQ before export to the extracellular environment. The type of isoprenyl derivative differs among the different pherotypes and depends on ComX primary sequence.

Its subcellular location is the secreted. Functionally, part of a major quorum-sensing system that regulates the development of genetic competence. Acts through the activation of the two-component regulatory system ComP/ComA composed of a sensor histidine kinase, ComP, and a response regulator, ComA. This chain is ComX pheromone, found in Bacillus mojavensis.